The following is a 306-amino-acid chain: MKHLISMKDIGKEEILEILDEARKMEELLNTKRPLKLLEGKILATVFYEPSTRTRLSFETAMKRLGGEVITMTDLKSSSVAKGESLIDTIRVISGYADIIVLRHPSEGAARLASEYSQVPIINAGDGSNQHPTQTLLDLYTIMREIGRIDGIKIAFVGDLKYGRTVHSLVYALSLFENVEMYFVSPKELRLPKDIIEDLKAKNIKFYEKESLDDLDDDIDVLYVTRIQKERFPDPNEYEKVKGSYKIKREYVEGKKFIIMHPLPRVDEIDYDVDDLPQAKYFKQSFYGIPVRMAILKKLIEDNEGE.

Residues Arg-53 and Thr-54 each coordinate carbamoyl phosphate. Lys-82 is a binding site for L-aspartate. Residues Arg-103, His-131, and Gln-134 each coordinate carbamoyl phosphate. The L-aspartate site is built by Arg-164 and Arg-226. Residues Leu-263 and Pro-264 each coordinate carbamoyl phosphate.

The protein belongs to the aspartate/ornithine carbamoyltransferase superfamily. ATCase family. Heterododecamer (2C3:3R2) of six catalytic PyrB chains organized as two trimers (C3), and six regulatory PyrI chains organized as three dimers (R2).

It carries out the reaction carbamoyl phosphate + L-aspartate = N-carbamoyl-L-aspartate + phosphate + H(+). It participates in pyrimidine metabolism; UMP biosynthesis via de novo pathway; (S)-dihydroorotate from bicarbonate: step 2/3. Catalyzes the condensation of carbamoyl phosphate and aspartate to form carbamoyl aspartate and inorganic phosphate, the committed step in the de novo pyrimidine nucleotide biosynthesis pathway. The protein is Aspartate carbamoyltransferase catalytic subunit of Methanocaldococcus jannaschii (strain ATCC 43067 / DSM 2661 / JAL-1 / JCM 10045 / NBRC 100440) (Methanococcus jannaschii).